A 473-amino-acid polypeptide reads, in one-letter code: Photosystem II CP43 reaction center protein (473 aa).

Residues 1–14 constitute a propeptide that is removed on maturation; the sequence is MKTLYSLRRFYPVE. Thr-15 carries the post-translational modification N-acetylthreonine. Residue Thr-15 is modified to Phosphothreonine. The next 5 helical transmembrane spans lie at 69-93, 134-155, 178-200, 255-275, and 291-312; these read LFEV…PHLA, LLGP…KDRN, KALY…RKIT, KPFA…LSYS, and WFNN…ASQA. Residue Glu-367 participates in [CaMn4O5] cluster binding. Residues 447-471 traverse the membrane as a helical segment; sequence RARAAAAGFEKGIDRDFEPVLSMTP.

Belongs to the PsbB/PsbC family. PsbC subfamily. As to quaternary structure, PSII is composed of 1 copy each of membrane proteins PsbA, PsbB, PsbC, PsbD, PsbE, PsbF, PsbH, PsbI, PsbJ, PsbK, PsbL, PsbM, PsbT, PsbX, PsbY, PsbZ, Psb30/Ycf12, at least 3 peripheral proteins of the oxygen-evolving complex and a large number of cofactors. It forms dimeric complexes. Requires Binds multiple chlorophylls and provides some of the ligands for the Ca-4Mn-5O cluster of the oxygen-evolving complex. It may also provide a ligand for a Cl- that is required for oxygen evolution. PSII binds additional chlorophylls, carotenoids and specific lipids. as cofactor.

Its subcellular location is the plastid. It is found in the chloroplast thylakoid membrane. In terms of biological role, one of the components of the core complex of photosystem II (PSII). It binds chlorophyll and helps catalyze the primary light-induced photochemical processes of PSII. PSII is a light-driven water:plastoquinone oxidoreductase, using light energy to abstract electrons from H(2)O, generating O(2) and a proton gradient subsequently used for ATP formation. The protein is Photosystem II CP43 reaction center protein of Gossypium hirsutum (Upland cotton).